The primary structure comprises 264 residues: Major prion protein (264 aa).

A signal peptide spans 1–24 (MVKSHIGSWILVLFVAMWSDVGLC). The interaction with GRB2, ERI3 and SYN1 stretch occupies residues 25–241 (KKRPKPGGGW…ESQAYYQRGA (217 aa)). Residues 28-118 (PKPGGGWNTG…QWNKPSKPKT (91 aa)) are disordered. The segment covering 37-54 (GGSRYPGPGSPGGNRYPP) has biased composition (low complexity). A run of 6 repeats spans residues 54 to 62 (PQGGGGWGQ), 63 to 70 (PHGGGWGQ), 71 to 78 (PHGGGWGQ), 79 to 86 (PHGGGWGQ), 87 to 94 (PHGGGWGQ), and 95 to 103 (PHGGGGWGQ). The 6 X 8 AA tandem repeats of P-H-G-G-G-W-G-Q stretch occupies residues 54–103 (PQGGGGWGQPHGGGWGQPHGGGWGQPHGGGWGQPHGGGWGQPHGGGGWGQ). The segment covering 55-107 (QGGGGWGQPHGGGWGQPHGGGWGQPHGGGWGQPHGGGWGQPHGGGGWGQGGTH) has biased composition (gly residues). Histidine 72, glycine 73, glycine 74, histidine 80, glycine 81, glycine 82, histidine 88, glycine 89, glycine 90, histidine 96, and glycine 98 together coordinate Cu(2+). Cysteines 190 and 225 form a disulfide. Asparagine 192 and asparagine 208 each carry an N-linked (GlcNAc...) asparagine glycan. Alanine 241 carries the GPI-anchor amidated alanine lipid modification. A propeptide spans 242–264 (SVILFSSPPVILLISFLIFLIVG) (removed in mature form).

The protein belongs to the prion family. Monomer and homodimer. Has a tendency to aggregate into amyloid fibrils containing a cross-beta spine, formed by a steric zipper of superposed beta-strands. Soluble oligomers may represent an intermediate stage on the path to fibril formation. Copper binding may promote oligomerization. Interacts with GRB2, APP, ERI3/PRNPIP and SYN1. Mislocalized cytosolically exposed PrP interacts with MGRN1; this interaction alters MGRN1 subcellular location and causes lysosomal enlargement. Interacts with KIAA1191.

The protein localises to the cell membrane. The protein resides in the golgi apparatus. Functionally, its primary physiological function is unclear. Has cytoprotective activity against internal or environmental stresses. May play a role in neuronal development and synaptic plasticity. May be required for neuronal myelin sheath maintenance. May play a role in iron uptake and iron homeostasis. Soluble oligomers are toxic to cultured neuroblastoma cells and induce apoptosis (in vitro). Association with GPC1 (via its heparan sulfate chains) targets PRNP to lipid rafts. Also provides Cu(2+) or Zn(2+) for the ascorbate-mediated GPC1 deaminase degradation of its heparan sulfate side chains. This chain is Major prion protein (PRNP), found in Ailuropoda melanoleuca (Giant panda).